The sequence spans 149 residues: Down syndrome critical region protein 9 (149 aa).

The disordered stretch occupies residues 1–41 (MGRICPVNSRARRLRARPGRPSGDSLPYHQLQGGAPRLWSP).

The chain is Down syndrome critical region protein 9 (DSCR9) from Pan troglodytes (Chimpanzee).